The following is a 360-amino-acid chain: UPF0496 protein At3g19250 (360 aa).

Positions 1–29 are disordered; that stretch reads MPHCFTFKPASPEGSLGDDHLPHPSPEGS. 2 consecutive transmembrane segments (helical) span residues 205–225 and 229–249; these read HHAT…VAAS and IAYH…TPYL.

This sequence belongs to the UPF0496 family.

The protein localises to the membrane. In Arabidopsis thaliana (Mouse-ear cress), this protein is UPF0496 protein At3g19250.